Here is a 215-residue protein sequence, read N- to C-terminus: Cytochrome b6 (215 aa).

A helical membrane pass occupies residues 32-52 (IFYCLGGITLTCFIVQVATGF). C35 lines the heme c pocket. Residues H86 and H100 each coordinate heme b. 3 helical membrane passes run 90–110 (ASMM…TGGF), 116–136 (LTWV…VTGY), and 186–206 (AHTF…FVMI). Heme b is bound by residues H187 and H202.

Belongs to the cytochrome b family. PetB subfamily. The 4 large subunits of the cytochrome b6-f complex are cytochrome b6, subunit IV (17 kDa polypeptide, PetD), cytochrome f and the Rieske protein, while the 4 small subunits are PetG, PetL, PetM and PetN. The complex functions as a dimer. Heme b is required as a cofactor. Requires heme c as cofactor.

The protein resides in the plastid. It is found in the chloroplast thylakoid membrane. Component of the cytochrome b6-f complex, which mediates electron transfer between photosystem II (PSII) and photosystem I (PSI), cyclic electron flow around PSI, and state transitions. This chain is Cytochrome b6, found in Emiliania huxleyi (Coccolithophore).